Reading from the N-terminus, the 253-residue chain is MAHCKTEQDDWLLAHLKYLLFIFNFFFWVGGAAVMAVGIWTLVEKSGYLSILASSTFAASAYILIFVGGLVMTTGFLGFGAIIREQKSCLSTYFCLLLVIFLVELVAGVLAHVYYQRLSDELKWHLNSTLTEHYGQPRAAEITASVDRLQQDFKCCGSNSSADWQHSAYILSQEALGRQVPDSCCKTVVARCGQRAHPSNIYKVEGGCMAKLEQFVADHLLLMGAVGIGVACLQICGMVLTCCLHRRLQQQFY.

The next 3 membrane-spanning stretches (helical) occupy residues 19–39, 63–83, and 93–113; these read LLFI…AVGI, ILIF…GAII, and YFCL…LAHV. A glycan (N-linked (GlcNAc...) asparagine) is linked at Asn127. The helical transmembrane segment at 220–240 threads the bilayer; it reads LLLMGAVGIGVACLQICGMVL.

It belongs to the tetraspanin (TM4SF) family.

The protein localises to the membrane. In Mus musculus (Mouse), this protein is Tetraspanin-11 (Tspan11).